The chain runs to 315 residues: Heme oxygenase 2 (315 aa).

Over residues 1–15 the composition is skewed to polar residues; sequence MSSEVETSEGVDESE. Residues 1–29 form a disordered region; the sequence is MSSEVETSEGVDESENNSTAPEKENHTKM. S2 carries the post-translational modification N-acetylserine. Position 2 is a phosphoserine (S2). At 2–294 the chain is on the cytoplasmic side; that stretch reads SSEVETSEGV…TAMAVLRKPS (293 aa). Heme b is bound by residues H44, Y153, K198, and R202. HRM repeat units follow at residues 263–268 and 280–285; these read KCPFYA and NCPFRT. 2 positions are modified to S-nitrosocysteine: C264 and C281. The helical; Anchor for type IV membrane protein transmembrane segment at 295 to 315 threads the bilayer; it reads LQLILAASVALVAGLLAWYYM.

Belongs to the heme oxygenase family. A soluble form arises by proteolytic removal of the membrane anchor. Post-translationally, S-nitrosylated by BLVRB. Widely distributed in body with a high concentration in the brain.

It is found in the microsome membrane. The protein localises to the endoplasmic reticulum membrane. The enzyme catalyses heme b + 3 reduced [NADPH--hemoprotein reductase] + 3 O2 = biliverdin IXalpha + CO + Fe(2+) + 3 oxidized [NADPH--hemoprotein reductase] + 3 H2O + H(+). With respect to regulation, inhibited by metalloporphyrins such as Sn- and Zn-protoporphyrins. In terms of biological role, catalyzes the oxidative cleavage of heme at the alpha-methene bridge carbon, released as carbon monoxide (CO), to generate biliverdin IXalpha, while releasing the central heme iron chelate as ferrous iron. The sequence is that of Heme oxygenase 2 (Hmox2) from Rattus norvegicus (Rat).